A 334-amino-acid polypeptide reads, in one-letter code: uncharacterized protein (334 aa).

Belongs to the Gfo/Idh/MocA family.

This is an uncharacterized protein from Rhizobium meliloti (Ensifer meliloti).